The following is a 130-amino-acid chain: Phosphomevalonate dehydratase small subunit (130 aa).

S62 (proton acceptor) is an active-site residue.

It belongs to the AcnX type II small subunit family. In terms of assembly, heterodimer composed of a large subunit (PMDh-L) and a small subunit (PMDh-S).

It catalyses the reaction (R)-5-phosphomevalonate = (2E)-3-methyl-5-phosphooxypent-2-enoate + H2O. It functions in the pathway isoprenoid biosynthesis; isopentenyl diphosphate biosynthesis via mevalonate pathway. Functionally, component of a hydro-lyase that catalyzes the dehydration of mevalonate 5-phosphate (MVA5P) to form trans-anhydromevalonate 5-phosphate (tAHMP). Involved in the archaeal mevalonate (MVA) pathway, which provides fundamental precursors for isoprenoid biosynthesis, such as isopentenyl diphosphate (IPP) and dimethylallyl diphosphate (DMAPP). This is Phosphomevalonate dehydratase small subunit from Pyrococcus abyssi (strain GE5 / Orsay).